The chain runs to 53 residues: Conotoxin Cal9.2f (53 aa).

The propeptide occupies 1 to 6 (KKGVTL). 3 disulfides stabilise this stretch: cysteine 15–cysteine 32, cysteine 20–cysteine 42, and cysteine 22–cysteine 47.

Expressed by the venom duct.

Its subcellular location is the secreted. In terms of biological role, probable neurotoxin with unknown target. Possibly targets ion channels. This chain is Conotoxin Cal9.2f, found in Californiconus californicus (California cone).